Consider the following 364-residue polypeptide: GTPase Obg (364 aa).

Positions 1-161 constitute an Obg domain; sequence MRFVDEVTIS…KYLRLELKIL (161 aa). One can recognise an OBG-type G domain in the interval 162-334; that stretch reads ADAGIIGLPN…LVDAIWKLQS (173 aa). GTP is bound by residues 168–175, 193–197, 217–220, 287–290, and 315–317; these read GLPNAGKS, FTTLN, DIPG, NKID, and SAE. Residues serine 175 and threonine 195 each coordinate Mg(2+).

It belongs to the TRAFAC class OBG-HflX-like GTPase superfamily. OBG GTPase family. As to quaternary structure, monomer. Mg(2+) serves as cofactor.

It is found in the cytoplasm. Its function is as follows. An essential GTPase which binds GTP, GDP and possibly (p)ppGpp with moderate affinity, with high nucleotide exchange rates and a fairly low GTP hydrolysis rate. Plays a role in control of the cell cycle, stress response, ribosome biogenesis and in those bacteria that undergo differentiation, in morphogenesis control. This is GTPase Obg from Lawsonia intracellularis (strain PHE/MN1-00).